A 271-amino-acid chain; its full sequence is HTH-type transcriptional repressor AllR (271 aa).

In terms of domain architecture, HTH iclR-type spans 21-83; sequence AQALERGIAI…SQLGWWHIGL (63 aa). Positions 43–62 form a DNA-binding region, H-T-H motif; it reads VSDISLNLDLPLSTTFRLLK. The region spanning 98 to 267 is the IclR-ED domain; the sequence is VLSVAGPFMR…ARDISTALGL (170 aa). Residues 154–156, Asp207, Cys217, and 234–236 contribute to the glyoxylate site; these read SGA and SIS.

Negative regulator of allantoin and glyoxylate utilization operons. Binds to the gcl promoter and to the allS-allA intergenic region. This Escherichia coli O6:H1 (strain CFT073 / ATCC 700928 / UPEC) protein is HTH-type transcriptional repressor AllR (allR).